A 560-amino-acid polypeptide reads, in one-letter code: Interferon alpha/beta receptor 1 (560 aa).

The N-terminal stretch at 1-24 is a signal peptide; sequence MLGLLGATTLMLVAGAPWVLPAGG. The Extracellular portion of the chain corresponds to 25 to 437; the sequence is ADLRSPENVV…EKTKPGSTSQ (413 aa). Fibronectin type-III domains are found at residues 29–125, 133–224, 231–329, and 333–433; these read SPEN…FQEA, HLEA…INTT, SPEN…TEMQ, and FPPV…TKPG. N-linked (GlcNAc...) asparagine glycosylation is present at Asn55. The cysteines at positions 76 and 84 are disulfide-linked. N-linked (GlcNAc...) asparagine glycosylation is found at Asn85, Asn108, and Asn172. A disulfide bridge links Cys199 with Cys220. N-linked (GlcNAc...) asparagine glycosylation is found at Asn222, Asn249, and Asn254. Cys283 and Cys291 are oxidised to a cystine. 3 N-linked (GlcNAc...) asparagine glycosylation sites follow: Asn313, Asn377, and Asn417. Cys404 and Cys427 are oxidised to a cystine. Residues 438-458 form a helical membrane-spanning segment; sequence AWLIAGILSAILLFPAVFYGV. Residues 459-560 are Cytoplasmic-facing; that stretch reads KVVSRCINYV…GEEILRQAAV (102 aa). Cys464 carries the S-palmitoyl cysteine lipid modification. Residues Tyr467 and Tyr482 each carry the phosphotyrosine; by TYK2 modification. An important for interaction with TYK2 region spans residues 492–501; that stretch reads LLSTSEEQTE. A phosphoserine mark is found at Ser496 and Ser536. A disordered region spans residues 520 to 560; sequence QIDDNHSRCSSQTNRDSGVYSNEDENSGSKIGEEILRQAAV. Residues 527-539 are compositionally biased toward polar residues; it reads RCSSQTNRDSGVY. The span at 550 to 560 shows a compositional bias: basic and acidic residues; the sequence is IGEEILRQAAV.

Belongs to the type II cytokine receptor family. In terms of assembly, heterodimer with IFNAR2; forming the receptor for type I interferon. Interacts with TYK2. Interacts with STAT1 and STAT2; the interaction requires its phosphorylation at Tyr-482. Interacts (serine-phosphorylated form) with FBXW11, the substrate recognition component of a SCF (SKP1-CUL1-F-box protein) E3 ubiquitin-protein ligase complex. Interacts with SHMT2; this promotes interaction with ABRAXAS2 and the BRISC complex. Interacts with TRIM10; this interaction prevents association between IFNAR1 and TYK2. Ubiquitinated, leading to its internalization and degradation. Polyubiquitinated via 'Lys-48'-linked and 'Lys-63'-linked ubiquitin chains, leading to receptor internalization and lysosomal degradation. The 'Lys-63'-linked ubiquitin chains are cleaved off by the BRISC complex. In terms of processing, phosphorylated on tyrosine residues in response to interferon-binding: phosphorylation by TYK2 tyrosine kinase creates docking sites for STAT proteins. Phosphorylated on serine residues in response to interferon binding; this promotes interaction with FBXW11 and ubiquitination. Post-translationally, palmitoylation at Cys-464 is required for the activation of STAT1 and STAT2.

The protein resides in the cell membrane. It localises to the late endosome. It is found in the lysosome. In terms of biological role, together with IFNAR2, forms the heterodimeric receptor for type I interferons (including interferons alpha, beta, epsilon, omega and kappa). Type I interferon binding activates the JAK-STAT signaling cascade, resulting in transcriptional activation or repression of interferon-regulated genes that encode the effectors of the interferon response. Mechanistically, type I interferon-binding brings the IFNAR1 and IFNAR2 subunits into close proximity with one another, driving their associated Janus kinases (JAKs) (TYK2 bound to IFNAR1 and JAK1 bound to IFNAR2) to cross-phosphorylate one another. The activated kinases phosphorylate specific tyrosine residues on the intracellular domains of IFNAR1 and IFNAR2, forming docking sites for the STAT transcription factors. STAT proteins are then phosphorylated by the JAKs, promoting their translocation into the nucleus to regulate expression of interferon-regulated genes. Can also act independently of IFNAR2: form an active IFNB1 receptor by itself and activate a signaling cascade that does not involve activation of the JAK-STAT pathway. This Sus scrofa (Pig) protein is Interferon alpha/beta receptor 1 (IFNAR1).